The primary structure comprises 293 residues: 4-hydroxy-tetrahydrodipicolinate synthase (293 aa).

Threonine 45 contacts pyruvate. Residue tyrosine 133 is the Proton donor/acceptor of the active site. Lysine 161 functions as the Schiff-base intermediate with substrate in the catalytic mechanism. Position 204 (isoleucine 204) interacts with pyruvate.

It belongs to the DapA family. As to quaternary structure, homotetramer; dimer of dimers.

It is found in the cytoplasm. It carries out the reaction L-aspartate 4-semialdehyde + pyruvate = (2S,4S)-4-hydroxy-2,3,4,5-tetrahydrodipicolinate + H2O + H(+). It participates in amino-acid biosynthesis; L-lysine biosynthesis via DAP pathway; (S)-tetrahydrodipicolinate from L-aspartate: step 3/4. Its function is as follows. Catalyzes the condensation of (S)-aspartate-beta-semialdehyde [(S)-ASA] and pyruvate to 4-hydroxy-tetrahydrodipicolinate (HTPA). In Edwardsiella ictaluri (strain 93-146), this protein is 4-hydroxy-tetrahydrodipicolinate synthase.